The following is a 431-amino-acid chain: Enolase (431 aa).

Gln166 contributes to the (2R)-2-phosphoglycerate binding site. The Proton donor role is filled by Glu208. Mg(2+) is bound by residues Asp245, Glu288, and Asp315. 4 residues coordinate (2R)-2-phosphoglycerate: Lys340, Arg369, Ser370, and Lys391. The active-site Proton acceptor is Lys340.

This sequence belongs to the enolase family. Requires Mg(2+) as cofactor.

The protein resides in the cytoplasm. It localises to the secreted. The protein localises to the cell surface. It carries out the reaction (2R)-2-phosphoglycerate = phosphoenolpyruvate + H2O. Its pathway is carbohydrate degradation; glycolysis; pyruvate from D-glyceraldehyde 3-phosphate: step 4/5. Its function is as follows. Catalyzes the reversible conversion of 2-phosphoglycerate (2-PG) into phosphoenolpyruvate (PEP). It is essential for the degradation of carbohydrates via glycolysis. In Clostridium perfringens (strain 13 / Type A), this protein is Enolase.